A 79-amino-acid chain; its full sequence is Metallothionein-like protein type 2 (79 aa).

Belongs to the metallothionein superfamily. Type 15 family.

In terms of biological role, metallothioneins have a high content of cysteine residues that bind various heavy metals. The polypeptide is Metallothionein-like protein type 2 (MT1) (Malus domestica (Apple)).